Reading from the N-terminus, the 455-residue chain is Venom prothrombin activator hopsarin-D (455 aa).

The signal sequence occupies residues 1–20; sequence MAPQLLLCLILTFLWSVPEA. Positions 21 to 40 are excised as a propeptide; it reads ESNVFLKSKVANRFLQRTKR. In terms of domain architecture, Gla spans 41–86; the sequence is SNSLFEEIRPGNIERECIEEKCSKEEAREVFEDNEKTETFWNVYVD. 4-carboxyglutamate is present on residues Glu46, Glu47, Glu54, Glu56, Glu59, Glu60, Glu65, Glu66, Glu69, Glu72, and Glu75. A disulfide bond links Cys57 and Cys62. Positions 86–121 constitute an EGF-like 1; calcium-binding domain; that stretch reads DGDQCSSNPCHYHGTCKDGIGSYTCTCLPNYEGKNC. 10 disulfides stabilise this stretch: Cys90-Cys101, Cys95-Cys110, Cys112-Cys121, Cys129-Cys140, Cys136-Cys149, Cys151-Cys164, Cys172-Cys328, Cys236-Cys252, Cys376-Cys390, and Cys401-Cys429. O-linked (Hex...) serine glycosylation occurs at Ser92. The EGF-like 2 domain occupies 129–164; it reads CRAFNGNCWHFCKRVQSETQCSCAESYRLGVDGHSC. Positions 182–209 are cleaved as a propeptide — activation peptide; the sequence is REASLPDFVQSQKATLLKKSDNPSPDIR. Residues 210 to 453 form the Peptidase S1 domain; that stretch reads IVNGMDSKLG…FIPWIKKIMS (244 aa). His251 functions as the Charge relay system in the catalytic mechanism. N-linked (GlcNAc...) asparagine glycosylation occurs at Asn254. Asp308 functions as the Charge relay system in the catalytic mechanism. Residue Ser405 is the Charge relay system of the active site.

This sequence belongs to the peptidase S1 family. Snake venom subfamily. As to quaternary structure, heterodimer of a light chain and a heavy chain; disulfide-linked. Post-translationally, the vitamin K-dependent, enzymatic carboxylation of some glutamate residues allows the modified protein to bind calcium. As to expression, expressed by the venom gland.

The protein resides in the secreted. It carries out the reaction Selective cleavage of Arg-|-Thr and then Arg-|-Ile bonds in prothrombin to form thrombin.. Functionally, snake prothrombin activator that attacks the hemostatic system of prey. This protein is functionally similar to blood coagulation factor Xa. The procoagulant activity of hopsarin-D is approximately 10-fold lower than that of trocarin-D and FXa. The polypeptide is Venom prothrombin activator hopsarin-D (Hoplocephalus stephensii (Stephens's banded snake)).